A 233-amino-acid polypeptide reads, in one-letter code: tRNA (guanine-N(7)-)-methyltransferase (233 aa).

S-adenosyl-L-methionine is bound by residues Glu-65, Glu-90, Asp-117, and Asp-139. Asp-139 is an active-site residue. Substrate contacts are provided by residues Lys-143, Asp-175, and 212–215 (TRYE).

Belongs to the class I-like SAM-binding methyltransferase superfamily. TrmB family.

The catalysed reaction is guanosine(46) in tRNA + S-adenosyl-L-methionine = N(7)-methylguanosine(46) in tRNA + S-adenosyl-L-homocysteine. It functions in the pathway tRNA modification; N(7)-methylguanine-tRNA biosynthesis. Functionally, catalyzes the formation of N(7)-methylguanine at position 46 (m7G46) in tRNA. The sequence is that of tRNA (guanine-N(7)-)-methyltransferase from Roseobacter denitrificans (strain ATCC 33942 / OCh 114) (Erythrobacter sp. (strain OCh 114)).